A 278-amino-acid polypeptide reads, in one-letter code: Manganese import system permease protein ScaB (278 aa).

The next 8 membrane-spanning stretches (helical) occupy residues 18 to 38 (ALIT…FIIL), 40 to 60 (GMSL…ALSF), 61 to 81 (ILGI…SILI), 136 to 156 (VTIG…RPLL), 172 to 192 (VKLY…TAMQ), 194 to 214 (VGTI…YLYA), 220 to 240 (MMLL…FIGY), and 244 to 264 (IAVG…SFFI).

This sequence belongs to the ABC-3 integral membrane protein family.

The protein resides in the cell membrane. In terms of biological role, part of an ABC transporter complex involved in manganese import. The polypeptide is Manganese import system permease protein ScaB (Streptococcus pneumoniae).